Consider the following 113-residue polypeptide: Hydrogenase maturation factor HybF (113 aa).

The Ni(2+) site is built by His-2 and Glu-3. Residues Cys-73, Cys-76, Cys-89, and Cys-92 each contribute to the Zn(2+) site.

This sequence belongs to the HypA/HybF family. HybF subfamily.

Its function is as follows. Involved in the maturation of [NiFe] hydrogenases. Required for nickel insertion into the metal center of the hydrogenase. The polypeptide is Hydrogenase maturation factor HybF (Klebsiella pneumoniae).